Here is a 292-residue protein sequence, read N- to C-terminus: 4-hydroxy-tetrahydrodipicolinate synthase (292 aa).

Residue T45 participates in pyruvate binding. Catalysis depends on Y133, which acts as the Proton donor/acceptor. K161 acts as the Schiff-base intermediate with substrate in catalysis. Pyruvate is bound at residue I203.

Belongs to the DapA family. Homotetramer; dimer of dimers.

It is found in the cytoplasm. It catalyses the reaction L-aspartate 4-semialdehyde + pyruvate = (2S,4S)-4-hydroxy-2,3,4,5-tetrahydrodipicolinate + H2O + H(+). It functions in the pathway amino-acid biosynthesis; L-lysine biosynthesis via DAP pathway; (S)-tetrahydrodipicolinate from L-aspartate: step 3/4. In terms of biological role, catalyzes the condensation of (S)-aspartate-beta-semialdehyde [(S)-ASA] and pyruvate to 4-hydroxy-tetrahydrodipicolinate (HTPA). This is 4-hydroxy-tetrahydrodipicolinate synthase from Vibrio vulnificus (strain CMCP6).